The chain runs to 237 residues: Small ribosomal subunit protein uS2 (237 aa).

It belongs to the universal ribosomal protein uS2 family.

The sequence is that of Small ribosomal subunit protein uS2 from Clostridioides difficile (strain 630) (Peptoclostridium difficile).